The following is a 484-amino-acid chain: Ribosomal RNA small subunit methyltransferase F (484 aa).

Residues 126 to 132 (AAAPGSK), Glu150, Asp177, and Asp195 contribute to the S-adenosyl-L-methionine site. The active-site Nucleophile is Cys248.

The protein belongs to the class I-like SAM-binding methyltransferase superfamily. RsmB/NOP family.

Its subcellular location is the cytoplasm. The catalysed reaction is cytidine(1407) in 16S rRNA + S-adenosyl-L-methionine = 5-methylcytidine(1407) in 16S rRNA + S-adenosyl-L-homocysteine + H(+). Specifically methylates the cytosine at position 1407 (m5C1407) of 16S rRNA. The sequence is that of Ribosomal RNA small subunit methyltransferase F from Pectobacterium atrosepticum (strain SCRI 1043 / ATCC BAA-672) (Erwinia carotovora subsp. atroseptica).